We begin with the raw amino-acid sequence, 68 residues long: uncharacterized protein (68 aa).

This is an uncharacterized protein from Invertebrate iridescent virus 3 (IIV-3).